Consider the following 653-residue polypeptide: Exocyst complex component EXO70C1 (653 aa).

Basic and acidic residues-rich tracts occupy residues 1–34, 159–177, and 438–451; these read MEKS…DELH, SREE…DGSN, and NKPE…QQQR. 3 disordered regions span residues 1-50, 159-190, and 432-456; these read MEKS…HSLV, SREE…DSDR, and EANQ…DDEE.

It belongs to the EXO70 family. In terms of assembly, interacts with ROH1A. Binds directly to B1L. Phosphorylated. Expressed in anthers, pollen and root trichoblast cells.

The protein localises to the cytoplasm. Required for global plant growth and for male transmission. Involved in the regulation of tip growth of pollen tube. The polypeptide is Exocyst complex component EXO70C1 (Arabidopsis thaliana (Mouse-ear cress)).